We begin with the raw amino-acid sequence, 321 residues long: Olfactory receptor 51V1 (321 aa).

The Extracellular portion of the chain corresponds to 1–34 (MFLSSRMITSVSPSTSTNSSFLLTGFSGMEQQYP). Asn-18 carries N-linked (GlcNAc...) asparagine glycosylation. Residues 35–55 (WLSIPFSSIYAMVLLGNCMVL) traverse the membrane as a helical segment. Over 56–63 (HVIWTEPS) the chain is Cytoplasmic. The chain crosses the membrane as a helical span at residues 64 to 84 (LHQPMFYFLSMLALTDLCMGL). The Extracellular segment spans residues 85 to 108 (STVYTVLGILWGIIREISLDSCIA). Cys-106 and Cys-188 are joined by a disulfide. Residues 109 to 129 (QSYFIHGLSFMESSVLLTMAF) traverse the membrane as a helical segment. Topologically, residues 130–148 (DRYIAICNPLRYSSILTNS) are cytoplasmic. The helical transmembrane segment at 149–169 (RIIKIGLTIIGRSFFFITPPI) threads the bilayer. Residues 170–205 (ICLKFFNYCHFHILSHSFCLHQDLLRLACSDIRFNS) are Extracellular-facing. The chain crosses the membrane as a helical span at residues 206 to 226 (YYALMLVICILLLDAILILFS). The Cytoplasmic segment spans residues 227–246 (YILILKSVLAVASQEERHKL). A helical membrane pass occupies residues 247–267 (FQTCISHICAVLVFYIPIISL). Over 268–282 (TMVHRFGKHLSPVAH) the chain is Extracellular. A helical membrane pass occupies residues 283–303 (VLIGNIYILFPPLMNPIIYSV). The Cytoplasmic portion of the chain corresponds to 304-321 (KTQQIHTRMLRLFSLKRY).

It belongs to the G-protein coupled receptor 1 family.

The protein localises to the cell membrane. In terms of biological role, odorant receptor. The protein is Olfactory receptor 51V1 (OR51V1) of Homo sapiens (Human).